Here is a 407-residue protein sequence, read N- to C-terminus: MGVISPTETLFLKSQHRLLQPRNYSYALAFHSTRRVANFPRNSFSSLGSCSVDFPLRSNPISQNSKSIHPWRRYVSESDSNELYHKKVSSIMETLKQAYSFIPHGILLSTILALVYPPSFTWFKPRYFVPGLGFMMFAVGINSNERDFLEALKRPDAIFAGYIGQYLIKPLLGYIFGVIAVSLFNLPTSIGAGIMLVSCVSGAQLSNYTTFLTDPSLAALSIVMTSISTATAVLVTPMLSLLLIGKKLPVDVFGMISSILQVVITPIAAGLLLNRLFPRLSNAIKPFLPALTVIDMSCCIGAPLALNIDSILSPFGATILFLVITFHLLAFVAGYFFTGFFFSKAPDVKALQRTISYETGMQSSLLALALATKFFQDPLVGVPPAISTVVMSLMGVSLVTIWKNRKE.

The transit peptide at 1–57 (MGVISPTETLFLKSQHRLLQPRNYSYALAFHSTRRVANFPRNSFSSLGSCSVDFPLR) directs the protein to the chloroplast. 9 helical membrane passes run 101 to 121 (FIPH…PSFT), 122 to 142 (WFKP…VGIN), 162 to 184 (YIGQ…VSLF), 191 to 213 (GAGI…TFLT), 222 to 242 (IVMT…LSLL), 252 to 272 (VFGM…AGLL), 286 to 306 (PFLP…PLAL), 317 to 337 (ATIL…GYFF), and 379 to 399 (LVGV…VSLV).

This sequence belongs to the bile acid:sodium symporter (BASS) (TC 2.A.28) family. Widely expressed.

Its subcellular location is the membrane. The protein resides in the plastid. The protein localises to the chloroplast envelope. Functionally, plastidic transporter involved in the biosynthesis of aliphatic glucosinolates by translocating the biosynthetic intermediates of Met-derived glucosinolates across chloroplast membranes. Transports short chain (C2) alpha-keto acids, such as 4-methylsulfanyl-2-oxobutanoic acid, from the cytosol to the chloroplast where they are subjected to chain elongation cycles. Also functions in the transport of chain-elongated (C3 to C8) Met derivatives from the chloroplast to the cytosol. Does not seem to be involved in the transport of indole-derived glucosinolates. In Arabidopsis thaliana (Mouse-ear cress), this protein is Probable sodium/metabolite cotransporter BASS5, chloroplastic (BASS5).